The chain runs to 312 residues: 3-methyl-2-oxobutanoate hydroxymethyltransferase (312 aa).

This sequence belongs to the PanB family.

It catalyses the reaction 3-methyl-2-oxobutanoate + (6R)-5,10-methylene-5,6,7,8-tetrahydrofolate + H2O = 2-dehydropantoate + (6S)-5,6,7,8-tetrahydrofolate. It functions in the pathway cofactor biosynthesis; (R)-pantothenate biosynthesis; (R)-pantoate from 3-methyl-2-oxobutanoate: step 1/2. In terms of biological role, probable 3-methyl-2-oxobutanoate hydroxymethyltransferase required for pantothenic acid biosynthesis. Acts downstream in the pantothenic acid pathway. This chain is 3-methyl-2-oxobutanoate hydroxymethyltransferase, found in Saccharomyces cerevisiae (strain ATCC 204508 / S288c) (Baker's yeast).